The sequence spans 491 residues: Delayed-rectifier potassium channel regulatory subunit KCNS3 (491 aa).

The Cytoplasmic portion of the chain corresponds to 1–182 (MVFGEFFHRP…IRMENPAYCL (182 aa)). Residues 183–204 (SAKLIAISSLSVVLASIVAMCV) traverse the membrane as a helical segment. Residues 205-220 (HSMSEFQNEDGEVDDP) lie on the Extracellular side of the membrane. A helical transmembrane segment spans residues 221 to 243 (VLEGVEIACIAWFTGELAVRLAA). Residues 244-254 (APCQKKFWKNP) are Cytoplasmic-facing. Residues 255-275 (LNIIDFVSIIPFYATLAVDTK) traverse the membrane as a helical segment. Residues 276 to 285 (EEESEDIENM) lie on the Extracellular side of the membrane. Residues 286–306 (GKVVQILRLMRIFRILKLARH) form a helical; Voltage-sensor membrane-spanning segment. Residues 307–321 (SVGLRSLGATLRHSY) lie on the Cytoplasmic side of the membrane. Residues 322–343 (HEVGLLLLFLSVGISIFSVLIY) traverse the membrane as a helical segment. Topologically, residues 344 to 357 (SVEKDDHTSSLTSI) are extracellular. The helical intramembrane region spans 358–369 (PICWWWATISMT). The Selectivity filter signature appears at 370 to 375 (TVGYGD). An intramembrane segment occupies 370–377 (TVGYGDTH). Residues 378 to 384 (PVTLAGK) are Extracellular-facing. The chain crosses the membrane as a helical span at residues 385-413 (LIASTCIICGILVVALPITIIFNKFSKYY). Topologically, residues 414-491 (QKQKDIDVDQ…TTSLENCTAK (78 aa)) are cytoplasmic.

Belongs to the potassium channel family. S (TC 1.A.1.2) subfamily. Kv9.3/KCNS3 sub-subfamily. As to quaternary structure, heterotetramer with KCNB1. Does not form homomultimers. As to expression, detected in whole normal term placental and placental chorionic plate arteries and veins. Detected in syncytiotrophoblast and in blood vessel endothelium within intermediate villi and chorionic plate (at protein level). Detected in most tissues, but not in peripheral blood lymphocytes. The highest levels of expression are in lung.

It is found in the cell membrane. In terms of biological role, potassium channel regulatory subunit that modulates the delayed rectifier potassium channel activity of KCNB1 by namely slowing down the deactivation and inactivation time constants. While it does not form functional channel on its own, it can form functional heterotetrameric channels with KCNB1. The protein is Delayed-rectifier potassium channel regulatory subunit KCNS3 of Homo sapiens (Human).